Consider the following 333-residue polypeptide: tRNA uridine(34) hydroxylase (333 aa).

Positions 123–217 (SDPEVILVDT…YLEEIKQEES (95 aa)) constitute a Rhodanese domain. Cysteine 177 acts as the Cysteine persulfide intermediate in catalysis.

Belongs to the TrhO family.

It catalyses the reaction uridine(34) in tRNA + AH2 + O2 = 5-hydroxyuridine(34) in tRNA + A + H2O. Its function is as follows. Catalyzes oxygen-dependent 5-hydroxyuridine (ho5U) modification at position 34 in tRNAs. The polypeptide is tRNA uridine(34) hydroxylase (Shewanella sp. (strain MR-7)).